We begin with the raw amino-acid sequence, 60 residues long: Metallothionein-like protein EMB30 (60 aa).

Belongs to the metallothionein superfamily. Type 15 family.

Functionally, metallothioneins have a high content of cysteine residues that bind various heavy metals. This chain is Metallothionein-like protein EMB30 (EMB30), found in Picea glauca (White spruce).